The chain runs to 118 residues: Evasin P546 (118 aa).

Residues 1–21 form the signal peptide; that stretch reads MKVLLYIAASCLMLLALNVSA. 4 cysteine pairs are disulfide-bonded: cysteine 38–cysteine 59, cysteine 55–cysteine 96, cysteine 72–cysteine 101, and cysteine 91–cysteine 110. Asparagine 45 is a glycosylation site (N-linked (GlcNAc...) asparagine).

The protein resides in the secreted. Salivary chemokine-binding protein which binds to host chemokines CCL1, CCL3, CCL5 and CCL22. The sequence is that of Evasin P546 from Amblyomma cajennense (Cayenne tick).